Here is a 512-residue protein sequence, read N- to C-terminus: Cytochrome P450 72A13 (512 aa).

The chain crosses the membrane as a helical span at residues 2–22 (EISVASVTVSVAVVVVSWWVW). C460 serves as a coordination point for heme.

Belongs to the cytochrome P450 family. Heme serves as cofactor.

The protein resides in the membrane. The protein is Cytochrome P450 72A13 (CYP72A13) of Arabidopsis thaliana (Mouse-ear cress).